The chain runs to 602 residues: Proteasome-associated ATPase (602 aa).

Residues 1-17 (MSGPRSGSGSDGSTGRP) are compositionally biased toward low complexity. Residues 1–31 (MSGPRSGSGSDGSTGRPGDAESRRSAYEKET) form a disordered region. Over residues 18–31 (GDAESRRSAYEKET) the composition is skewed to basic and acidic residues. Positions 19-106 (DAESRRSAYE…LKEEVDRLAQ (88 aa)) form a coiled coil. Position 289–294 (289–294 (GCGKTL)) interacts with ATP. The tract at residues 601-602 (YL) is docks into pockets in the proteasome alpha-ring.

It belongs to the AAA ATPase family. As to quaternary structure, homohexamer. Assembles into a hexameric ring structure that caps the 20S proteasome core. Strongly interacts with the prokaryotic ubiquitin-like protein Pup through a hydrophobic interface; the interacting region of ARC lies in its N-terminal coiled-coil domain. There is one Pup binding site per ARC hexamer ring. Upon ATP-binding, the C-terminus of ARC interacts with the alpha-rings of the proteasome core, possibly by binding to the intersubunit pockets.

The protein operates within protein degradation; proteasomal Pup-dependent pathway. Functionally, ATPase which is responsible for recognizing, binding, unfolding and translocation of pupylated proteins into the bacterial 20S proteasome core particle. May be essential for opening the gate of the 20S proteasome via an interaction with its C-terminus, thereby allowing substrate entry and access to the site of proteolysis. Thus, the C-termini of the proteasomal ATPase may function like a 'key in a lock' to induce gate opening and therefore regulate proteolysis. The chain is Proteasome-associated ATPase from Frankia casuarinae (strain DSM 45818 / CECT 9043 / HFP020203 / CcI3).